The sequence spans 182 residues: Ribosome-recycling factor (182 aa).

It belongs to the RRF family.

The protein resides in the cytoplasm. Its function is as follows. Responsible for the release of ribosomes from messenger RNA at the termination of protein biosynthesis. May increase the efficiency of translation by recycling ribosomes from one round of translation to another. The polypeptide is Ribosome-recycling factor (Prochlorococcus marinus (strain AS9601)).